Here is a 479-residue protein sequence, read N- to C-terminus: Glutamate receptor U1 (479 aa).

The first 17 residues, 1–17 (MEKSLLFLFAVTLLSVG), serve as a signal peptide directing secretion. Topologically, residues 18–163 (CTDAGESKGS…LFGFLTPFSK (146 aa)) are extracellular. An N-linked (GlcNAc...) asparagine glycan is attached at Asn79. Residues 164-184 (ETWIGILVAYMVTSLCLFLVG) form a helical membrane-spanning segment. Residues 185-229 (RLSPCEWTELSTEQNNFTFLNSLWFGAGAFTLQGAEPHPKSVSAR) lie on the Cytoplasmic side of the membrane. The helical transmembrane segment at 230–250 (IIAVIWWIFSIVLVAAYIASF) threads the bilayer. Residues 251-414 (AAFLNSDSVQ…AGWNPVQPHT (164 aa)) are Extracellular-facing. The N-linked (GlcNAc...) asparagine glycan is linked to Asn282. The chain crosses the membrane as a helical span at residues 415–435 (LGGIFLILGIGLALGVIAALI). Residues 436 to 479 (ELVLKARNNADQQKKSCCSAFSEEMGERLGTNKENQGAVDSVKS) are Cytoplasmic-facing.

It belongs to the glutamate-gated ion channel (TC 1.A.10.1) family. In terms of assembly, homomeric.

The protein localises to the cell membrane. Its subcellular location is the postsynaptic cell membrane. Its function is as follows. Receptor for glutamate. L-glutamate acts as an excitatory neurotransmitter at many synapses in the central nervous system. The postsynaptic actions of Glu are mediated by a variety of receptors that are named according to their selective agonists. This receptor binds domoate &gt; kainate &gt; AMPA &gt; NBQX &gt; glutamate. This Xenopus laevis (African clawed frog) protein is Glutamate receptor U1 (kbp).